The chain runs to 408 residues: LL-diaminopimelate aminotransferase (408 aa).

The substrate site is built by Tyr15 and Gly42. Pyridoxal 5'-phosphate-binding positions include Tyr72, 108-109 (SK), Tyr132, Asn187, Tyr218, and 246-248 (SFS). The substrate site is built by Lys109, Tyr132, and Asn187. Lys249 carries the post-translational modification N6-(pyridoxal phosphate)lysine. Pyridoxal 5'-phosphate-binding residues include Arg257 and Asn292. Positions 292 and 388 each coordinate substrate.

It belongs to the class-I pyridoxal-phosphate-dependent aminotransferase family. LL-diaminopimelate aminotransferase subfamily. In terms of assembly, homodimer. It depends on pyridoxal 5'-phosphate as a cofactor.

The enzyme catalyses (2S,6S)-2,6-diaminopimelate + 2-oxoglutarate = (S)-2,3,4,5-tetrahydrodipicolinate + L-glutamate + H2O + H(+). It participates in amino-acid biosynthesis; L-lysine biosynthesis via DAP pathway; LL-2,6-diaminopimelate from (S)-tetrahydrodipicolinate (aminotransferase route): step 1/1. In terms of biological role, involved in the synthesis of meso-diaminopimelate (m-DAP or DL-DAP), required for both lysine and peptidoglycan biosynthesis. Catalyzes the direct conversion of tetrahydrodipicolinate to LL-diaminopimelate. In Leptospira borgpetersenii serovar Hardjo-bovis (strain L550), this protein is LL-diaminopimelate aminotransferase.